Here is a 330-residue protein sequence, read N- to C-terminus: Ribosomal RNA small subunit methyltransferase H (330 aa).

S-adenosyl-L-methionine-binding positions include 51–53 (GGH), D70, D118, and Q125. The tract at residues 276-330 (STDSTPPGLPVPLPDRQPELRLLTRGAELPTEQETAANPRAASARLRAAERTREP) is disordered. Residues 311 to 321 (AANPRAASARL) show a composition bias toward low complexity.

Belongs to the methyltransferase superfamily. RsmH family.

The protein resides in the cytoplasm. It catalyses the reaction cytidine(1402) in 16S rRNA + S-adenosyl-L-methionine = N(4)-methylcytidine(1402) in 16S rRNA + S-adenosyl-L-homocysteine + H(+). Its function is as follows. Specifically methylates the N4 position of cytidine in position 1402 (C1402) of 16S rRNA. This chain is Ribosomal RNA small subunit methyltransferase H, found in Thermobifida fusca (strain YX).